The sequence spans 188 residues: NADH-quinone oxidoreductase subunit I 2 (188 aa).

2 4Fe-4S ferredoxin-type domains span residues 56-88 (HFLK…VVPY) and 98-127 (AKFE…LGQQ). [4Fe-4S] cluster is bound by residues C68, C71, C74, C78, C107, C110, C113, and C117.

The protein belongs to the complex I 23 kDa subunit family. NDH-1 is composed of 14 different subunits. Subunits NuoA, H, J, K, L, M, N constitute the membrane sector of the complex. It depends on [4Fe-4S] cluster as a cofactor.

It is found in the cell inner membrane. The enzyme catalyses a quinone + NADH + 5 H(+)(in) = a quinol + NAD(+) + 4 H(+)(out). Functionally, NDH-1 shuttles electrons from NADH, via FMN and iron-sulfur (Fe-S) centers, to quinones in the respiratory chain. The immediate electron acceptor for the enzyme in this species is believed to be ubiquinone. Couples the redox reaction to proton translocation (for every two electrons transferred, four hydrogen ions are translocated across the cytoplasmic membrane), and thus conserves the redox energy in a proton gradient. The chain is NADH-quinone oxidoreductase subunit I 2 from Rhizobium etli (strain ATCC 51251 / DSM 11541 / JCM 21823 / NBRC 15573 / CFN 42).